The sequence spans 458 residues: tRNA modification GTPase MnmE (458 aa).

(6S)-5-formyl-5,6,7,8-tetrahydrofolate is bound by residues R26, E88, and R127. Positions 224-378 (GLSTAIIGRP…IEDRINQLFF (155 aa)) constitute a TrmE-type G domain. N234 contributes to the K(+) binding site. GTP contacts are provided by residues 234–239 (NVGKSS), 253–259 (TDIAGTT), and 278–281 (DTAG). S238 is a binding site for Mg(2+). K(+) contacts are provided by T253, I255, and T258. T259 is a binding site for Mg(2+). Residue K458 participates in (6S)-5-formyl-5,6,7,8-tetrahydrofolate binding.

This sequence belongs to the TRAFAC class TrmE-Era-EngA-EngB-Septin-like GTPase superfamily. TrmE GTPase family. In terms of assembly, homodimer. Heterotetramer of two MnmE and two MnmG subunits. It depends on K(+) as a cofactor.

The protein resides in the cytoplasm. Exhibits a very high intrinsic GTPase hydrolysis rate. Involved in the addition of a carboxymethylaminomethyl (cmnm) group at the wobble position (U34) of certain tRNAs, forming tRNA-cmnm(5)s(2)U34. The protein is tRNA modification GTPase MnmE of Streptococcus pyogenes serotype M12 (strain MGAS9429).